Here is a 446-residue protein sequence, read N- to C-terminus: MLLPQLCWLPLLAGLLPPVPAQKFSALTFLRVDQDKDKDCSLDCAGSPQKPLCASDGRTFLSRCEFQRAKCKDPQLEIAYRGNCKDVSRCVAERKYTQEQARKEFQQVFIPECNDDGTYSQVQCHSYTGYCWCVTPNGRPISGTAVAHKTPRCPGSVNEKLPQREGTGKTDDAAAPALETQPQGDEEDIASRYPTLWTEQVKSRQNKTNKNSVSSCDQEHQSALEEAKQPKNDNVVIPECAHGGLYKPVQCHPSTGYCWCVLVDTGRPIPGTSTRYEQPKCDNTARAHPAKARDLYKGRQLQGCPGAKKHEFLTSVLDALSTDMVHAASDPSSSSGRLSEPDPSHTLEERVVHWYFKLLDKNSSGDIGKKEIKPFKRFLRKKSKPKKCVKKFVEYCDVNNDKSISVQELMGCLGVAKEDGKADTKKRHTPRGHAESTSNRQPRKQG.

The N-terminal stretch at 1-21 (MLLPQLCWLPLLAGLLPPVPA) is a signal peptide. The Kazal-like domain occupies 34–86 (QDKDKDCSLDCAGSPQKPLCASDGRTFLSRCEFQRAKCKDPQLEIAYRGNCKD). 6 disulfide bridges follow: Cys40/Cys71, Cys44/Cys64, Cys53/Cys84, Cys90/Cys113, Cys124/Cys131, and Cys133/Cys153. The Thyroglobulin type-1 1 domain maps to 87-153 (VSRCVAERKY…TAVAHKTPRC (67 aa)). Residues 147–228 (AHKTPRCPGS…EHQSALEEAK (82 aa)) are disordered. Residues 161-172 (LPQREGTGKTDD) are compositionally biased toward basic and acidic residues. N-linked (GlcNAc...) asparagine glycosylation occurs at Asn206. Over residues 206-216 (NKTNKNSVSSC) the composition is skewed to polar residues. The region spanning 213-281 (VSSCDQEHQS…TSTRYEQPKC (69 aa)) is the Thyroglobulin type-1 2 domain. Cystine bridges form between Cys216/Cys240, Cys251/Cys258, and Cys260/Cys281. The segment covering 217–228 (DQEHQSALEEAK) has biased composition (basic and acidic residues). EF-hand domains lie at 347 to 382 (LEER…LRKK) and 384 to 419 (KPKK…AKED). 10 residues coordinate Ca(2+): Asp360, Asn362, Ser364, Asp366, Glu371, Asp397, Asn399, Asp401, Ser403, and Glu408. Residue Asn362 is glycosylated (N-linked (GlcNAc...) asparagine). Residues 416 to 446 (AKEDGKADTKKRHTPRGHAESTSNRQPRKQG) form a disordered region.

As to quaternary structure, binds various proteins from the extracellular matrix.

It is found in the secreted. It localises to the extracellular space. Its subcellular location is the extracellular matrix. The protein localises to the basement membrane. Promotes matrix assembly and cell adhesiveness. Can stimulate endothelial cell proliferation, migration, as well as angiogenesis. This chain is SPARC-related modular calcium-binding protein 2 (SMOC2), found in Homo sapiens (Human).